A 962-amino-acid chain; its full sequence is MSNTTVEQFAAELKRPVEDLLKQLKEAGVSKNSGSDSLTLDDKQLLNAYLTKKNGSNSSTISIRRTKTEVSTVDGVKVETRKRGRTVKIPSAEELAAQVKAAQTQAAPVRPEQTAEDAAKARAEAAARAEARAKAEAEAAKLKAAKAGNKAKPAAQKPTEAKAETAPVAAETKPAEESKAEKAQADKMPSEKPAEPKEKAAKPKHERNGKGKDAKKPAKPAAPAVPQPVVSAEEQAQRDEEARRAAALRAHQEALLKEKQERQARREAMKQQAEQQAKAAQEAKTGRQRPAKPAEKPQAAAPAVENKPVNPAKAKKEDRRNRDDEGQGRNAKGKGGKGGRDRNNARNGDDERVRGGKKGKKLKLEPNQHAFQAPTEPVVHEVLVPETITVADLAHKMAVKGVEVVKALMKMGMMVTINQSIDQDTALIVVEELGHIGKPAAADDPEAFLDEGAEAVEAEALPRPPVVTVMGHVDHGKTSLLDYIRRTKVVQGEAGGITQHIGAYHVETPRGVITFLDTPGHEAFTAMRARGAKATDIVILVVAADDGVMPQTIEAIAHAKAAGVPMVVAVNKIDKEAANPERIRQELTAHEVVPDEWGGDVQFIDVSAKKGLNIDALLEAVLLEAEVLELTAPVDAPAKGIIVEARLDKGRGAVATLLVQSGTLKKGDMLLAGTAFGKIRAMVDENGKSITEAGPSIPVEILGLSDVPNAGEDAMVLADEKKAREIALFRQGKYRDVRLAKQQAAKLENMFNNMGETQAQSLSVIIKADVQGSYEALAGSLKKLSTDEVKVNVLHSGVGGITESDVNLAIASGAFIIGFNVRADASSRKLAENENVEIRYYNIIYDAINDVKAAMSGMLSPEEKEQVTGTVEIRQVISVSKVGNIAGCMVTDGVVKRDSHVRLIRNNVVIHTGELASLKRYKDDVKEVRMGFECGLMLKGYNEIMEGDQLECFDIVEVARSL.

The disordered stretch occupies residues 99 to 366 (VKAAQTQAAP…KKGKKLKLEP (268 aa)). Basic and acidic residues predominate over residues 117 to 141 (DAAKARAEAAARAEARAKAEAEAAK). The segment covering 145-155 (AKAGNKAKPAA) has biased composition (low complexity). Residues 173 to 216 (KPAEESKAEKAQADKMPSEKPAEPKEKAAKPKHERNGKGKDAKK) are compositionally biased toward basic and acidic residues. Residues 219–234 (KPAAPAVPQPVVSAEE) show a composition bias toward low complexity. Residues 235 to 269 (QAQRDEEARRAAALRAHQEALLKEKQERQARREAM) are compositionally biased toward basic and acidic residues. The span at 270-283 (KQQAEQQAKAAQEA) shows a compositional bias: low complexity. Composition is skewed to basic and acidic residues over residues 314-327 (AKKE…DEGQ) and 338-354 (GGRD…ERVR). The 170-residue stretch at 462–631 (PRPPVVTVMG…LLEAEVLELT (170 aa)) folds into the tr-type G domain. The tract at residues 471–478 (GHVDHGKT) is G1. 471-478 (GHVDHGKT) provides a ligand contact to GTP. A G2 region spans residues 496–500 (GITQH). Residues 517–520 (DTPG) are G3. GTP is bound by residues 517-521 (DTPGH) and 571-574 (NKID). The tract at residues 571–574 (NKID) is G4. The segment at 607-609 (SAK) is G5.

This sequence belongs to the TRAFAC class translation factor GTPase superfamily. Classic translation factor GTPase family. IF-2 subfamily.

The protein resides in the cytoplasm. One of the essential components for the initiation of protein synthesis. Protects formylmethionyl-tRNA from spontaneous hydrolysis and promotes its binding to the 30S ribosomal subunits. Also involved in the hydrolysis of GTP during the formation of the 70S ribosomal complex. The protein is Translation initiation factor IF-2 of Neisseria meningitidis serogroup B (strain ATCC BAA-335 / MC58).